We begin with the raw amino-acid sequence, 472 residues long: Zinc finger imprinted 3 (472 aa).

The 73-residue stretch at Val8–Ala80 folds into the KRAB domain. 11 consecutive C2H2-type zinc fingers follow at residues Leu167 to His189, Phe195 to His217, Tyr223 to His245, Tyr251 to His273, Tyr279 to His301, Phe307 to His329, Tyr335 to His357, Tyr363 to His385, Tyr391 to His413, Tyr419 to His441, and Tyr447 to His470.

It belongs to the krueppel C2H2-type zinc-finger protein family.

It localises to the nucleus. Its function is as follows. May be involved in transcriptional regulation. This chain is Zinc finger imprinted 3 (ZIM3), found in Homo sapiens (Human).